We begin with the raw amino-acid sequence, 111 residues long: Nucleoid-associated protein PSEEN1789 (111 aa).

2 disordered regions span residues 1-25 and 89-111; these read MMKGGMAGLMKQAQQMQEKMQKMQE and NSQDKMGSMTAGMQLPPGFKMPF.

This sequence belongs to the YbaB/EbfC family. Homodimer.

Its subcellular location is the cytoplasm. The protein localises to the nucleoid. Its function is as follows. Binds to DNA and alters its conformation. May be involved in regulation of gene expression, nucleoid organization and DNA protection. In Pseudomonas entomophila (strain L48), this protein is Nucleoid-associated protein PSEEN1789.